The primary structure comprises 765 residues: Complement factor B (765 aa).

The N-terminal stretch at 1–25 is a signal peptide; the sequence is MGSNRCPRLGLVPLILGLLSGGVSM. Sushi domains follow at residues 35 to 100, 101 to 160, and 163 to 220; these read SPCS…ECKA, IRCP…ICDD, and GYCP…SCQD. 6 disulfide bridges follow: Cys-37-Cys-76, Cys-62-Cys-98, Cys-103-Cys-145, Cys-131-Cys-158, Cys-165-Cys-205, and Cys-191-Cys-218. N-linked (GlcNAc...) asparagine glycans are attached at residues Asn-122 and Asn-142. Residues 270–469 enclose the VWFA domain; sequence NIYLVLDGSD…NLEDVFFQML (200 aa). Positions 278 and 280 each coordinate Mg(2+). An N-linked (GlcNAc...) asparagine glycan is attached at Asn-285. A Mg(2+)-binding site is contributed by Thr-353. Asn-378 carries an N-linked (GlcNAc...) asparagine glycan. One can recognise a Peptidase S1 domain in the interval 477 to 758; that stretch reads LCGMVWEHKD…VLPWLKEKLK (282 aa). Cystine bridges form between Cys-478-Cys-596, Cys-511-Cys-527, Cys-599-Cys-615, Cys-660-Cys-686, and Cys-699-Cys-729. Residues His-526 and Asp-576 each act as charge relay system in the active site. The Charge relay system role is filled by Ser-703.

Belongs to the peptidase S1 family. Monomer. Interacts with complement C3b; this interaction is dependent on the presence of Mg(2+). As to quaternary structure, catalytic component of the C3 convertase of the alternative complement pathway, also named C3bBb, composed of complement factor B Bb and complement C3b. Catalytic component of the C5 convertase of the alternative complement pathway, also named C3bBb3b, composed of complement factor B Bb and additional molecules of complement C3b. Interacts to CFP; this interaction contributes to the stabilization of the active C3-convertase enzyme complex. Requires Mg(2+) as cofactor. Mn(2+) is required as a cofactor. Cleaved by CFD following activation of the alternative complement system, generating Ba and Bb chains. Cleavage and activation takes place when CFB is already associated with complement C3b.

It is found in the secreted. It localises to the cell surface. It carries out the reaction Cleavage of Arg-|-Ser bond in complement component C3 alpha-chain to yield C3a and C3b, and Arg-|-Xaa bond in complement component C5 alpha-chain to yield C5a and C5b.. In terms of biological role, precursor of the catalytic component of the C3 and C5 convertase complexes of the alternative pathway of the complement system, a cascade of proteins that leads to phagocytosis and breakdown of pathogens and signaling that strengthens the adaptive immune system. The alternative complement pathway acts as an amplification loop that enhances other complement pathways (classical, lectin and GZMK) by promoting formation of additional C3 and C5 convertases. CFB is cleaved and activated by CFD to generate Ba and Bb chains; Bb chain constituting the catalytic component of the C3 and C5 convertases. Functionally, serine protease component of the complement C3 and C5 convertase complexes of the alternative complement pathway. Following cleavage and activation by factor D (CFD), forms the C3 convertase together with complement C3b. As part of the C3 convertase, cleaves and activates C3 into C3a anaphylatoxin and C3b opsonin, the next components of the complement pathways. When an additional complement C3b molecule binds to the C3 convertase, forms the C5 convertase, which cleaves and activates C5 into C5a anaphylatoxin and C5b component of the membrane attack complex. Its function is as follows. Involved in proliferation and differentiation of preactivated B-lymphocytes, rapid spreading of peripheral blood monocytes, stimulation of lymphocyte blastogenesis and lysis of erythrocytes. In Sus scrofa (Pig), this protein is Complement factor B (CFB).